Here is a 297-residue protein sequence, read N- to C-terminus: tRNA dimethylallyltransferase (297 aa).

9 to 16 (GPTASGKS) lines the ATP pocket. Residue 11–16 (TASGKS) participates in substrate binding. Interaction with substrate tRNA stretches follow at residues 34 to 37 (DSMQ) and 155 to 159 (QRVIR).

This sequence belongs to the IPP transferase family. Monomer. Mg(2+) serves as cofactor.

It catalyses the reaction adenosine(37) in tRNA + dimethylallyl diphosphate = N(6)-dimethylallyladenosine(37) in tRNA + diphosphate. Catalyzes the transfer of a dimethylallyl group onto the adenine at position 37 in tRNAs that read codons beginning with uridine, leading to the formation of N6-(dimethylallyl)adenosine (i(6)A). This is tRNA dimethylallyltransferase from Leuconostoc mesenteroides subsp. mesenteroides (strain ATCC 8293 / DSM 20343 / BCRC 11652 / CCM 1803 / JCM 6124 / NCDO 523 / NBRC 100496 / NCIMB 8023 / NCTC 12954 / NRRL B-1118 / 37Y).